We begin with the raw amino-acid sequence, 357 residues long: Acyl-coenzyme A:6-aminopenicillanic-acid-acyltransferase 40 kDa form (357 aa).

Positions 121 and 310 each coordinate 6-aminopenicillanate.

The protein belongs to the peptidase C45 family. In terms of assembly, the active form of the enzyme results from processing of the 40-kDa monomeric precursor to a heterodimer containing subunits of 11 and 29 kDa. In terms of processing, the pre-AAT protein is synthesized as 40 kDa precursor which is then self-processed into an 11 kDa (protein A) and a 29 kDa (protein B). The B protein carries AAT activity.

It is found in the peroxisome matrix. It carries out the reaction isopenicillin N + phenylacetyl-CoA + H2O = penicillin G + L-2-aminoadipate + CoA + H(+). Its pathway is antibiotic biosynthesis; penicillin G biosynthesis; penicillin G from L-alpha-aminoadipate and L-cysteine and L-valine: step 3/3. Nonribosomal peptide synthetase; part of the gene cluster that mediates the biosynthesis of penicillin, the world's most important antibiotic. AatA catalyzes the exchange of the alpha-aminoadipyl side chain of isopenicillin N for phenylacetic acid to yield penicillin. This step occurs in the peroxisomal matrix and the penM and paaT transporters are involved in the isopenicillin N and phenylacetic acid import into the peroxisome, respectively. The penicillin biosynthesis occurs via 3 enzymatic steps, the first corresponding to the production of the tripeptide N-[(5S)-5-amino-5-carboxypentanoyl]-L-cysteinyl-D-valine (LLD-ACV or ACV) by the NRPS acvA. The tripeptide ACV is then cyclized to isopenicillin N (IPN) by the isopenicillin N synthase ipnA that forms the beta-lactam nucleus. Finally, the alpha-aminoadipyl side chain is exchanged for phenylacetic acid by the isopenicillin N acyltransferase penDE to yield penicillin in the peroxisomal matrix. In Emericella nidulans (strain FGSC A4 / ATCC 38163 / CBS 112.46 / NRRL 194 / M139) (Aspergillus nidulans), this protein is Acyl-coenzyme A:6-aminopenicillanic-acid-acyltransferase 40 kDa form.